The chain runs to 993 residues: Serine/threonine-protein phosphatase 6 regulatory ankyrin repeat subunit B (993 aa).

28 ANK repeats span residues 7-36, 40-69, 73-102, 106-135, 139-168, 172-201, 205-234, 238-267, 271-301, 305-334, 338-367, 371-400, 404-433, 437-466, 470-498, 531-561, 566-595, 599-628, 633-662, 669-698, 702-731, 735-764, 771-800, 803-832, 838-867, 871-901, 905-934, and 941-970; these read TDQP…DVNT, EKRT…RVNA, MWLT…DVNA, NWQT…SVNV, GGRT…NINA, KDRR…EVTC, KGYT…EIDE, YGNT…NVNQ, NGFT…DVNI, DGKS…EIDC, DGNT…DTAK, HSMF…EIDT, FGRT…DFHK, CGRT…NVNE, WGRT…DNSE, EGYN…GFEE, ATKS…DLDI, KGRT…SIFV, TKRT…NPEA, KGQT…NVDT, LGCT…SILC, RGRT…SEED, QGYT…FRKF, NPFT…SSIV, KGRT…PVNA, SGKT…DLTV, DLNT…DESL, and ALQT…CVLA.

Protein phosphatase 6 (PP6) holoenzyme is proposed to be a heterotrimeric complex formed by the catalytic subunit, a SAPS domain-containing subunit (PP6R) and an ankyrin repeat-domain containing regulatory subunit (ARS). Interacts with PPP6R1.

Functionally, putative regulatory subunit of protein phosphatase 6 (PP6) that may be involved in the recognition of phosphoprotein substrates. This chain is Serine/threonine-protein phosphatase 6 regulatory ankyrin repeat subunit B (ANKRD44), found in Homo sapiens (Human).